The chain runs to 412 residues: FAD-dependent monooxygenase nscC (412 aa).

The first 21 residues, 1-21, serve as a signal peptide directing secretion; sequence MGKQQETILIIGAGISGLATS. Residues Glu-35 and Ala-46 each contribute to the FAD site. Asn-92 carries N-linked (GlcNAc...) asparagine glycosylation. Arg-119 lines the FAD pocket. Asn-170 and Asn-231 each carry an N-linked (GlcNAc...) asparagine glycan. FAD contacts are provided by Asp-326 and Gly-339.

This sequence belongs to the paxM FAD-dependent monooxygenase family. FAD is required as a cofactor.

The protein operates within secondary metabolite biosynthesis. In terms of biological role, FAD-dependent monooxygenase; part of the gene cluster that mediates the biosynthesis of neosartoricin B, a prenylated anthracenone that probably exhibits T-cell antiproliferative activity, suggestive of a physiological role as an immunosuppressive agent. The non-reducing polyketide synthase nscA probably synthesizes and cyclizes the decaketide backbone. The hydrolase nscB then mediates the product release through hydrolysis followed by spontaneous decarboxylation. The prenyltransferase nscD catalyzes the addition of the dimethylallyl group to the aromatic C5. The FAD-dependent monooxygenase nscC is then responsible for the stereospecific hydroxylation at C2. Neosartoricin B can be converted into two additional compounds neosartoricins C and D. Neosartoricin C is a spirocyclic compound that is cyclized through the attack of C3 hydroxyl on C14, followed by dehydration. On the other hand, neosartoricin D is a further cyclized compound in which attack of C2 on C14 in neosartoricin C results in the formation of the acetal-containing dioxabicyclo-octanone ring. Both of these compounds are novel and possibly represent related metabolites of the gene cluster. The sequence is that of FAD-dependent monooxygenase nscC from Trichophyton tonsurans (strain CBS 112818) (Scalp ringworm fungus).